The primary structure comprises 335 residues: Adenosine deaminase (335 aa).

Zn(2+) is bound by residues His12 and His14. Substrate is bound by residues His14 and Asp16. His197 provides a ligand contact to Zn(2+). Glu200 serves as the catalytic Proton donor. A Zn(2+)-binding site is contributed by Asp278.

This sequence belongs to the metallo-dependent hydrolases superfamily. Adenosine and AMP deaminases family. Adenosine deaminase subfamily. It depends on Zn(2+) as a cofactor.

The catalysed reaction is adenosine + H2O + H(+) = inosine + NH4(+). It catalyses the reaction 2'-deoxyadenosine + H2O + H(+) = 2'-deoxyinosine + NH4(+). Its function is as follows. Catalyzes the hydrolytic deamination of adenosine and 2-deoxyadenosine. This chain is Adenosine deaminase, found in Clostridium botulinum (strain Kyoto / Type A2).